The sequence spans 557 residues: Ribonuclease J 2 (557 aa).

Residues His-76, His-78, His-144, and Glu-166 each coordinate Zn(2+). 366-370 (HASSH) is a substrate binding site.

Belongs to the metallo-beta-lactamase superfamily. RNA-metabolizing metallo-beta-lactamase-like family. Bacterial RNase J subfamily. In terms of assembly, homodimer, may be a subunit of the RNA degradosome. The cofactor is Zn(2+).

The protein resides in the cytoplasm. An RNase that has 5'-3' exonuclease and possibly endoonuclease activity. Involved in maturation of rRNA and in some organisms also mRNA maturation and/or decay. This chain is Ribonuclease J 2, found in Staphylococcus aureus (strain MRSA252).